The chain runs to 688 residues: Glycine--tRNA ligase beta subunit (688 aa).

This sequence belongs to the class-II aminoacyl-tRNA synthetase family. In terms of assembly, tetramer of two alpha and two beta subunits.

The protein resides in the cytoplasm. The enzyme catalyses tRNA(Gly) + glycine + ATP = glycyl-tRNA(Gly) + AMP + diphosphate. The chain is Glycine--tRNA ligase beta subunit from Vibrio atlanticus (strain LGP32) (Vibrio splendidus (strain Mel32)).